A 78-amino-acid polypeptide reads, in one-letter code: Translational regulator CsrA (78 aa).

The protein belongs to the CsrA/RsmA family. Homodimer; the beta-strands of each monomer intercalate to form a hydrophobic core, while the alpha-helices form wings that extend away from the core.

It localises to the cytoplasm. Its function is as follows. A translational regulator that binds mRNA to regulate translation initiation and/or mRNA stability. Usually binds in the 5'-UTR at or near the Shine-Dalgarno sequence preventing ribosome-binding, thus repressing translation. Its main target seems to be the major flagellin gene, while its function is anatagonized by FliW. The protein is Translational regulator CsrA of Nitratidesulfovibrio vulgaris (strain ATCC 29579 / DSM 644 / CCUG 34227 / NCIMB 8303 / VKM B-1760 / Hildenborough) (Desulfovibrio vulgaris).